Reading from the N-terminus, the 135-residue chain is Small ribosomal subunit protein uS11 (135 aa).

The disordered stretch occupies residues 1–20; sequence MGRQRQQRSRGSRSRRRVRK.

Belongs to the universal ribosomal protein uS11 family. In terms of assembly, part of the 30S ribosomal subunit. Interacts with proteins S7 and S18. Binds to IF-3.

Its function is as follows. Located on the platform of the 30S subunit, it bridges several disparate RNA helices of the 16S rRNA. Forms part of the Shine-Dalgarno cleft in the 70S ribosome. This Rubrobacter xylanophilus (strain DSM 9941 / JCM 11954 / NBRC 16129 / PRD-1) protein is Small ribosomal subunit protein uS11.